A 133-amino-acid chain; its full sequence is uncharacterized protein (133 aa).

Residues 36 to 56 form a helical membrane-spanning segment; that stretch reads LPMLIALACIFLLLATCLLFM. Positions 105–133 are disordered; sequence HGRPTVPRQPLPGPEDNRSHCDYMESTKM. Residues 119 to 133 show a composition bias toward basic and acidic residues; the sequence is EDNRSHCDYMESTKM.

The protein localises to the membrane. This is an uncharacterized protein from Homo sapiens (Human).